Reading from the N-terminus, the 315-residue chain is Manganese-dependent 2,3-dihydroxybiphenyl 1,2-dioxygenase (315 aa).

2 VOC domains span residues 7-121 and 150-273; these read KFGH…IYYD and RIDH…LFSG. The Mn(2+) site is built by His153, His216, and Glu269.

It belongs to the extradiol ring-cleavage dioxygenase family. Homotetramer. Requires Mn(2+) as cofactor.

The enzyme catalyses biphenyl-2,3-diol + O2 = 2-hydroxy-6-oxo-6-phenylhexa-2,4-dienoate + H(+). The protein operates within xenobiotic degradation; biphenyl degradation; 2-hydroxy-2,4-pentadienoate and benzoate from biphenyl: step 3/4. Catalyzes the meta-cleavage of the hydroxylated biphenyl ring. The enzyme can oxidize a wide range of substrates, and the substrate preference order is 2,3-dihydroxybiphenyl &gt; 3-methylcatechol &gt; catechol &gt; 4-methylcatechol &gt; 4-chlorocatechol. The chain is Manganese-dependent 2,3-dihydroxybiphenyl 1,2-dioxygenase (bphC) from Geobacillus genomosp. 3.